Here is a 52-residue protein sequence, read N- to C-terminus: Protein PROPEP914 (52 aa).

Positions 25–52 are disordered; it reads DKPQDDMPQTPNSQVTIVSRDHPRGGNY. Positions 31 to 41 are enriched in polar residues; the sequence is MPQTPNSQVTI. Basic and acidic residues predominate over residues 43–52; that stretch reads SRDHPRGGNY.

As to expression, expressed in roots. Barely detected in flowers.

Functionally, produces a rapid alkalinization of the cellular media and the induction of defense-related genes, including chitinase 1b, chalcone synthase and CYP93A1. Not active in tobacco or Arabidopsis. The receptor for GmPep914 is probably different from the receptor for GmSubPep. The polypeptide is Protein PROPEP914 (PROPEP914) (Glycine max (Soybean)).